The primary structure comprises 445 residues: Glutamate-1-semialdehyde 2,1-aminomutase (445 aa).

K264 is subject to N6-(pyridoxal phosphate)lysine.

It belongs to the class-III pyridoxal-phosphate-dependent aminotransferase family. HemL subfamily. Pyridoxal 5'-phosphate is required as a cofactor.

It localises to the cytoplasm. The catalysed reaction is (S)-4-amino-5-oxopentanoate = 5-aminolevulinate. Its pathway is porphyrin-containing compound metabolism; protoporphyrin-IX biosynthesis; 5-aminolevulinate from L-glutamyl-tRNA(Glu): step 2/2. The sequence is that of Glutamate-1-semialdehyde 2,1-aminomutase from Halobacterium salinarum (strain ATCC 29341 / DSM 671 / R1).